Consider the following 219-residue polypeptide: Guanylate kinase (219 aa).

Positions 15-194 constitute a Guanylate kinase-like domain; it reads GLMLVISSPS…AFSSVRAIVE (180 aa). An ATP-binding site is contributed by 22–29; that stretch reads SPSGAGKS.

Belongs to the guanylate kinase family.

It is found in the cytoplasm. It catalyses the reaction GMP + ATP = GDP + ADP. Functionally, essential for recycling GMP and indirectly, cGMP. The chain is Guanylate kinase from Rhizobium meliloti (strain 1021) (Ensifer meliloti).